A 415-amino-acid polypeptide reads, in one-letter code: Phosphoglycerate transport system transcriptional regulatory protein PgtA (415 aa).

Positions 7–121 (SILLIDDDVD…KLLILIEDAL (115 aa)) constitute a Response regulatory domain. A 4-aspartylphosphate modification is found at Asp56. The Sigma-54 factor interaction domain maps to 142 to 341 (LIGRSEWMNQ…LANAAELFAV (200 aa)). 170–177 (GEHGTGRM) lines the ATP pocket. A DNA-binding region (H-T-H motif) is located at residues 385–404 (INEVAEYLQIPRKKLYLRMK).

In terms of processing, phosphorylated by PgtB.

The protein resides in the cytoplasm. Its function is as follows. Member of the two-component regulatory system PgtB/PgtA that regulates the inducible phosphoglycerate transport system. When activated by PgtB it acts in conjunction with sigma-54 as a transcriptional activator. This Salmonella typhimurium (strain LT2 / SGSC1412 / ATCC 700720) protein is Phosphoglycerate transport system transcriptional regulatory protein PgtA (pgtA).